The primary structure comprises 338 residues: Popeye domain-containing protein 1-A (338 aa).

Topologically, residues 1-40 (MTTESIFITTLPMDFNSQFDNITIGLNDNETLCENWREIH) are extracellular. N-linked (GlcNAc...) asparagine glycosylation is found at Asn21 and Asn29. A helical membrane pass occupies residues 41-61 (HLVFHLANTCFAAGLVIPSTL). At 62-65 (NLHM) the chain is on the cytoplasmic side. Residues 66 to 86 (LFLRGMLCLGCTFFIIWAVLF) form a helical membrane-spanning segment. Residues 87 to 91 (RCALD) lie on the Extracellular side of the membrane. Residues 92–112 (IMIWNATFLSINFMHFVYLVY) traverse the membrane as a helical segment. Residues 113 to 338 (KKRPIKIKKE…VGPLSHAVFC (226 aa)) lie on the Cytoplasmic side of the membrane. The interval 296–317 (TNDNEDGLQNFLRGTSTTSSQR) is disordered. Residues 307–317 (LRGTSTTSSQR) show a composition bias toward polar residues.

It belongs to the popeye family. In terms of tissue distribution, expressed in the heart.

The protein resides in the lateral cell membrane. It is found in the cell junction. The protein localises to the tight junction. Its subcellular location is the membrane. Functionally, cell adhesion molecule involved in the establishment and/or maintenance of cell integrity. Plays a role in vamp3-mediated vesicular transport and recycling of different receptor molecules. May be involved in the formation and regulation of the tight junction (TJ) paracellular permeability barrier in epithelial cells. May induce primordial adhesive contact and aggregation of epithelial cells in a Ca(2+)-independent manner. May be involved in epithelial movement during corneal sheet formation and regeneration. May play a role in the regulation of cell shape and movement by modulating the Rho-GTPase activity. May also be involved in striated muscle regeneration and in the regulation of cell spreading. This Xenopus laevis (African clawed frog) protein is Popeye domain-containing protein 1-A (popdc1-a).